Consider the following 356-residue polypeptide: 5-formaminoimidazole-4-carboxamide-1-(beta)-D-ribofuranosyl 5'-monophosphate synthetase 2 (356 aa).

5-amino-1-(5-phospho-beta-D-ribosyl)imidazole-4-carboxamide contacts are provided by His-27 and Ser-94. One can recognise an ATP-grasp domain in the interval Arg-101 to Ser-333. Residues Pro-145–Asp-196 and Glu-226 contribute to the ATP site. A 5-amino-1-(5-phospho-beta-D-ribosyl)imidazole-4-carboxamide-binding site is contributed by Asn-255. Mg(2+)-binding residues include Glu-293 and Glu-306.

Belongs to the phosphohexose mutase family. Requires Mg(2+) as cofactor. Mn(2+) serves as cofactor.

It catalyses the reaction 5-amino-1-(5-phospho-beta-D-ribosyl)imidazole-4-carboxamide + formate + ATP = 5-formamido-1-(5-phospho-D-ribosyl)imidazole-4-carboxamide + ADP + phosphate. It participates in purine metabolism; IMP biosynthesis via de novo pathway; 5-formamido-1-(5-phospho-D-ribosyl)imidazole-4-carboxamide from 5-amino-1-(5-phospho-D-ribosyl)imidazole-4-carboxamide (formate route): step 1/1. Catalyzes the ATP- and formate-dependent formylation of 5-aminoimidazole-4-carboxamide-1-beta-d-ribofuranosyl 5'-monophosphate (AICAR) to 5-formaminoimidazole-4-carboxamide-1-beta-d-ribofuranosyl 5'-monophosphate (FAICAR) in the absence of folates. In Methanosarcina mazei (strain ATCC BAA-159 / DSM 3647 / Goe1 / Go1 / JCM 11833 / OCM 88) (Methanosarcina frisia), this protein is 5-formaminoimidazole-4-carboxamide-1-(beta)-D-ribofuranosyl 5'-monophosphate synthetase 2.